The sequence spans 328 residues: Probable tRNA pseudouridine synthase B (328 aa).

The active-site Nucleophile is D71. The 76-residue stretch at 238–313 (LPKIWVRDSA…LVARVDRVIM (76 aa)) folds into the PUA domain.

Belongs to the pseudouridine synthase TruB family. Type 2 subfamily.

It carries out the reaction uridine(55) in tRNA = pseudouridine(55) in tRNA. In terms of biological role, could be responsible for synthesis of pseudouridine from uracil-55 in the psi GC loop of transfer RNAs. This is Probable tRNA pseudouridine synthase B from Pyrobaculum islandicum (strain DSM 4184 / JCM 9189 / GEO3).